A 152-amino-acid chain; its full sequence is Lipoprotein signal peptidase (152 aa).

2 helical membrane-spanning segments follow: residues 55–75 (NKMW…VFYM) and 85–105 (LGIS…DRVF). Residues Asp111 and Asp129 contribute to the active site. The chain crosses the membrane as a helical span at residues 124-144 (VFNIADSALCIGVVLIIIQTL).

Belongs to the peptidase A8 family.

The protein localises to the cell membrane. The enzyme catalyses Release of signal peptides from bacterial membrane prolipoproteins. Hydrolyzes -Xaa-Yaa-Zaa-|-(S,diacylglyceryl)Cys-, in which Xaa is hydrophobic (preferably Leu), and Yaa (Ala or Ser) and Zaa (Gly or Ala) have small, neutral side chains.. The protein operates within protein modification; lipoprotein biosynthesis (signal peptide cleavage). This protein specifically catalyzes the removal of signal peptides from prolipoproteins. In Bacillus cereus (strain AH187), this protein is Lipoprotein signal peptidase.